The following is a 288-amino-acid chain: Energy-coupling factor transporter ATP-binding protein EcfA2 (288 aa).

The ABC transporter domain occupies 3–243 (IVFEAVSHIY…RAELEAIGLG (241 aa)). 40-47 (GPTGSGKS) lines the ATP pocket.

It belongs to the ABC transporter superfamily. Energy-coupling factor EcfA family. In terms of assembly, forms a stable energy-coupling factor (ECF) transporter complex composed of 2 membrane-embedded substrate-binding proteins (S component), 2 ATP-binding proteins (A component) and 2 transmembrane proteins (T component).

Its subcellular location is the cell membrane. In terms of biological role, ATP-binding (A) component of a common energy-coupling factor (ECF) ABC-transporter complex. Unlike classic ABC transporters this ECF transporter provides the energy necessary to transport a number of different substrates. The protein is Energy-coupling factor transporter ATP-binding protein EcfA2 of Symbiobacterium thermophilum (strain DSM 24528 / JCM 14929 / IAM 14863 / T).